Reading from the N-terminus, the 131-residue chain is Small ribosomal subunit protein uS12 (131 aa).

The tract at residues 1-32 (MPTFSQLVRKGRTAPRYKTASPALQGSPQRRG) is disordered. At D89 the chain carries 3-methylthioaspartic acid. A disordered region spans residues 110–131 (RKQGRSKYGAKRAKGGAAAGKK). Over residues 111-131 (KQGRSKYGAKRAKGGAAAGKK) the composition is skewed to basic residues.

Belongs to the universal ribosomal protein uS12 family. As to quaternary structure, part of the 30S ribosomal subunit. Contacts proteins S8 and S17. May interact with IF1 in the 30S initiation complex.

In terms of biological role, with S4 and S5 plays an important role in translational accuracy. Interacts with and stabilizes bases of the 16S rRNA that are involved in tRNA selection in the A site and with the mRNA backbone. Located at the interface of the 30S and 50S subunits, it traverses the body of the 30S subunit contacting proteins on the other side and probably holding the rRNA structure together. The combined cluster of proteins S8, S12 and S17 appears to hold together the shoulder and platform of the 30S subunit. The sequence is that of Small ribosomal subunit protein uS12 from Acidobacterium capsulatum (strain ATCC 51196 / DSM 11244 / BCRC 80197 / JCM 7670 / NBRC 15755 / NCIMB 13165 / 161).